A 137-amino-acid polypeptide reads, in one-letter code: Nucleoside diphosphate kinase (137 aa).

ATP contacts are provided by Lys9, Phe57, Arg85, Thr91, Arg102, and Asn112. Catalysis depends on His115, which acts as the Pros-phosphohistidine intermediate.

This sequence belongs to the NDK family. As to quaternary structure, homotetramer. It depends on Mg(2+) as a cofactor.

The protein resides in the cytoplasm. The enzyme catalyses a 2'-deoxyribonucleoside 5'-diphosphate + ATP = a 2'-deoxyribonucleoside 5'-triphosphate + ADP. The catalysed reaction is a ribonucleoside 5'-diphosphate + ATP = a ribonucleoside 5'-triphosphate + ADP. In terms of biological role, major role in the synthesis of nucleoside triphosphates other than ATP. The ATP gamma phosphate is transferred to the NDP beta phosphate via a ping-pong mechanism, using a phosphorylated active-site intermediate. The sequence is that of Nucleoside diphosphate kinase from Geotalea uraniireducens (strain Rf4) (Geobacter uraniireducens).